A 391-amino-acid polypeptide reads, in one-letter code: Formate-dependent phosphoribosylglycinamide formyltransferase (391 aa).

N(1)-(5-phospho-beta-D-ribosyl)glycinamide contacts are provided by residues 18–19 and Glu78; that span reads EL. ATP is bound by residues Arg110, Lys151, 156 to 161, 191 to 194, and Glu199; these read SSGKGQ and EEFI. In terms of domain architecture, ATP-grasp spans 115–305; that stretch reads ELAHEELGIR…EFELHLRAIL (191 aa). 2 residues coordinate Mg(2+): Glu264 and Glu276. Residues Asp283, Lys353, and 360–361 contribute to the N(1)-(5-phospho-beta-D-ribosyl)glycinamide site; that span reads RR.

The protein belongs to the PurK/PurT family. In terms of assembly, homodimer.

It catalyses the reaction N(1)-(5-phospho-beta-D-ribosyl)glycinamide + formate + ATP = N(2)-formyl-N(1)-(5-phospho-beta-D-ribosyl)glycinamide + ADP + phosphate + H(+). The protein operates within purine metabolism; IMP biosynthesis via de novo pathway; N(2)-formyl-N(1)-(5-phospho-D-ribosyl)glycinamide from N(1)-(5-phospho-D-ribosyl)glycinamide (formate route): step 1/1. In terms of biological role, involved in the de novo purine biosynthesis. Catalyzes the transfer of formate to 5-phospho-ribosyl-glycinamide (GAR), producing 5-phospho-ribosyl-N-formylglycinamide (FGAR). Formate is provided by PurU via hydrolysis of 10-formyl-tetrahydrofolate. This is Formate-dependent phosphoribosylglycinamide formyltransferase from Nostoc sp. (strain PCC 7120 / SAG 25.82 / UTEX 2576).